The sequence spans 536 residues: MSAGEVERLVELSGGTGGDEEEEWLYGGPWDVHVHSDLAKDLDENEVERPEEENASANPPSGIEEEAAENGVAKPKVTETEDDSDSDSDDDEDDVHVTIGDIKTGAPQYGSYGTAPVNLNIKAGGRVYGNTGTKVKGVDLDAPGSINGVPLLEVDLDSFEDKPWRKPGADLSDYFNYGFNEDTWKAYCEKQKRIRMGLEVIPVTSTTNKITVQQGRTGNSEKEAALPSTKAEFTSPPSLFKTGLPPSRRLPGAIDVIGQTITISRVEGRRRANENSNIQVLSDRSATEVDNNFSKPPPFFPPGAPPTHLPPPPFLPPPPTVSTAPPLIPPPGFPPPPGAPPPSLIPTIESGHSSGYDSRSARAFPYGNVAFPHLTSSAPSWPSLVDTTKQWDYYARREKDRDRDRERDRDRERERDRDRERERTRERERERDHSPTPSVFNSDEERYRYREYAERGYERHRASREKEERHRERRHREKEETRHKSSRSNSRRRHESEEGDSHRRHKHKKSKRSKEGKEAGSEPVPEQESTEAAPAE.

Basic and acidic residues-rich tracts occupy residues 1 to 10 (MSAGEVERLV) and 32 to 42 (VHVHSDLAKDL). Disordered stretches follow at residues 1 to 95 (MSAG…EDDV), 212 to 246 (VQQG…GLPP), and 300 to 536 (FPPG…APAE). A sufficient for interaction with PAPOLA region spans residues 1 to 110 (MSAGEVERLV…DIKTGAPQYG (110 aa)). Residues 1–296 (MSAGEVERLV…TEVDNNFSKP (296 aa)) are necessary for stimulating PAPOLA activity. 2 stretches are compositionally biased toward acidic residues: residues 43–54 (DENEVERPEEEN) and 80–94 (TEDD…DEDD). Residues serine 84, serine 86, and serine 88 each carry the phosphoserine modification. The interval 136–219 (KGVDLDAPGS…ITVQQGRTGN (84 aa)) is sufficient for interaction with CPSF4. Residues 300–344 (FPPGAPPTHLPPPPFLPPPPTVSTAPPLIPPPGFPPPPGAPPPSL) are compositionally biased toward pro residues. Position 366 is a phosphotyrosine (tyrosine 366). A compositionally biased stretch (polar residues) spans 374–390 (LTSSAPSWPSLVDTTKQ). The tract at residues 383-536 (SLVDTTKQWD…QESTEAAPAE (154 aa)) is sufficient for interaction with CPSF1 and CSTF3. Basic and acidic residues predominate over residues 394-434 (YARREKDRDRDRERDRDRERERDRDRERERTRERERERDHS). The segment at 397–432 (REKDRDRDRERDRDRERERDRDRERERTRERERERD) is arg/Asp/Glu-rich domain. Serine 434 carries the post-translational modification Phosphoserine. Threonine 436 is subject to Phosphothreonine. A phosphoserine mark is found at serine 438 and serine 442. Positions 443-470 (DEERYRYREYAERGYERHRASREKEERH) are enriched in basic and acidic residues. Positions 484 to 493 (KSSRSNSRRR) are enriched in basic residues. Residue serine 496 is modified to Phosphoserine. The segment covering 502–512 (HRRHKHKKSKR) has biased composition (basic residues).

The protein belongs to the FIP1 family. Component of the cleavage and polyadenylation specificity factor (CPSF) complex, composed of CPSF1, CPSF2, CPSF3, CPSF4 and FIP1L1. Found in a complex with CPSF1, FIP1L1 and PAPOLA. Interacts with CPSF1, CPSF4, CSTF2 and CSTF3. Interacts with AHCYL1 (when phosphorylated); the interaction is direct and associates AHCYL1 with the CPSF complex and RNA. Interacts with PAPOLA; the interaction seems to be increased by the interaction with AHCYL1. Interacts with NUDT21/CPSF5; this interaction occurs in a RNA sequence-specific manner. Interacts (preferentially via unphosphorylated form and Arg/Glu/Asp-rich domain) with CPSF6 (via Arg/Ser-rich domain); this interaction mediates, at least in part, the interaction between the CFIm and CPSF complexes and may be inhibited by CPSF6 hyper-phosphorylation. Interacts (preferentially via unphosphorylated form and Arg/Asp/Glu-rich domain) with CPSF7 (via Arg/Ser-rich domain); this interaction mediates, at least in part, the interaction between the CFIm and CPSF complexes and may be inhibited by CPSF7 hyper-phosphorylation.

Its subcellular location is the nucleus. In terms of biological role, component of the cleavage and polyadenylation specificity factor (CPSF) complex that plays a key role in pre-mRNA 3'-end formation, recognizing the AAUAAA signal sequence and interacting with poly(A) polymerase and other factors to bring about cleavage and poly(A) addition. FIP1L1 contributes to poly(A) site recognition and stimulates poly(A) addition. Binds to U-rich RNA sequence elements surrounding the poly(A) site. May act to tether poly(A) polymerase to the CPSF complex. The polypeptide is Pre-mRNA 3'-end-processing factor FIP1 (Fip1l1) (Rattus norvegicus (Rat)).